The primary structure comprises 148 residues: Large ribosomal subunit protein bL9 (148 aa).

Part of the 50S ribosomal subunit.

Functionally, binds to the 23S rRNA. Extends more that 50 Angstroms beyond the surface of the 70S ribosome. The polypeptide is Large ribosomal subunit protein bL9 (rplI) (Thermus thermophilus (strain ATCC 27634 / DSM 579 / HB8)).